The chain runs to 416 residues: Serine hydroxymethyltransferase (416 aa).

Residues Leu-121 and 125-127 (GHL) contribute to the (6S)-5,6,7,8-tetrahydrofolate site. An N6-(pyridoxal phosphate)lysine modification is found at Lys-229.

It belongs to the SHMT family. As to quaternary structure, homodimer. The cofactor is pyridoxal 5'-phosphate.

The protein resides in the cytoplasm. The enzyme catalyses (6R)-5,10-methylene-5,6,7,8-tetrahydrofolate + glycine + H2O = (6S)-5,6,7,8-tetrahydrofolate + L-serine. It participates in one-carbon metabolism; tetrahydrofolate interconversion. Its pathway is amino-acid biosynthesis; glycine biosynthesis; glycine from L-serine: step 1/1. Its function is as follows. Catalyzes the reversible interconversion of serine and glycine with tetrahydrofolate (THF) serving as the one-carbon carrier. This reaction serves as the major source of one-carbon groups required for the biosynthesis of purines, thymidylate, methionine, and other important biomolecules. Also exhibits THF-independent aldolase activity toward beta-hydroxyamino acids, producing glycine and aldehydes, via a retro-aldol mechanism. The chain is Serine hydroxymethyltransferase from Aromatoleum aromaticum (strain DSM 19018 / LMG 30748 / EbN1) (Azoarcus sp. (strain EbN1)).